A 295-amino-acid chain; its full sequence is Ribosomal RNA small subunit methyltransferase A (295 aa).

Positions 31, 33, 58, 79, 104, and 129 each coordinate S-adenosyl-L-methionine.

This sequence belongs to the class I-like SAM-binding methyltransferase superfamily. rRNA adenine N(6)-methyltransferase family. RsmA subfamily.

The protein localises to the cytoplasm. It carries out the reaction adenosine(1518)/adenosine(1519) in 16S rRNA + 4 S-adenosyl-L-methionine = N(6)-dimethyladenosine(1518)/N(6)-dimethyladenosine(1519) in 16S rRNA + 4 S-adenosyl-L-homocysteine + 4 H(+). Functionally, specifically dimethylates two adjacent adenosines (A1518 and A1519) in the loop of a conserved hairpin near the 3'-end of 16S rRNA in the 30S particle. May play a critical role in biogenesis of 30S subunits. In Leuconostoc citreum (strain KM20), this protein is Ribosomal RNA small subunit methyltransferase A.